A 318-amino-acid polypeptide reads, in one-letter code: Polyprenal reductase (318 aa).

The Cytoplasmic segment spans residues 1–11 (MAPWAEAEHSA). A helical transmembrane segment spans residues 12 to 34 (LNPLRAVWLTLTAAFLLTLLLQL). Over 35 to 80 (LPPGLLPGCAIFQDLIRYGKTKCGEPSRPAACRAFDVPKRYFSHFY) the chain is Lumenal. A helical membrane pass occupies residues 81 to 101 (IISVLWNGFLLWCLTQSLFLG). At 102 to 117 (APFPSWLHGLLRILGA) the chain is on the cytoplasmic side. A helical membrane pass occupies residues 118–138 (AQFQGGELALSAFLVLVFLWL). At 139–157 (HSLRRLFECLYVSVFSNVM) the chain is on the lumenal side. A helical transmembrane segment spans residues 158-178 (IHVVQYCFGLVYYVLVGLTVL). Residues 179 to 194 (SQVPMDGRNAYITGKN) are Cytoplasmic-facing. The chain crosses the membrane as a helical span at residues 195–215 (LLMQARWFHILGMMMFIWSSA). At 216–260 (HQYKCHVILGNLRKNKAGVVIHCNHRIPFGDWFEYVSSPNYLAEL) the chain is on the lumenal side. A helical transmembrane segment spans residues 261–281 (MIYVSMAVTFGFHNLTWWLVV). Residues 282-318 (TNVFFNQALSAFLSHQFYKSKFVSYPKHRKAFLPFLF) lie on the Cytoplasmic side of the membrane.

The protein belongs to the steroid 5-alpha reductase family. Polyprenal reductase subfamily. In terms of tissue distribution, expressed in preadipocytes (at protein level). Overexpressed in hormone-refractory prostate cancers (HRPC). Almost no or little expression in normal adult organs.

It is found in the endoplasmic reticulum membrane. The catalysed reaction is a di-trans,poly-cis-dolichal + NADP(+) = a di-trans,poly-cis-polyprenal + NADPH + H(+). The enzyme catalyses a 3-oxo-5alpha-steroid + NADP(+) = a 3-oxo-Delta(4)-steroid + NADPH + H(+). It catalyses the reaction androst-4-ene-3,17-dione + NADPH + H(+) = 5alpha-androstan-3,17-dione + NADP(+). It carries out the reaction 17beta-hydroxy-5alpha-androstan-3-one + NADP(+) = testosterone + NADPH + H(+). The protein operates within protein modification; protein glycosylation. Functionally, plays a key role in early steps of protein N-linked glycosylation by being involved in the conversion of polyprenol into dolichol. Acts as a polyprenal reductase that mediates the reduction of polyprenal into dolichal in a NADP-dependent mechanism. Dolichols are required for the synthesis of dolichol-linked monosaccharides and the oligosaccharide precursor used for N-glycosylation. Also able to convert testosterone (T) into 5-alpha-dihydrotestosterone (DHT). The polypeptide is Polyprenal reductase (Homo sapiens (Human)).